The sequence spans 214 residues: Peptide methionine sulfoxide reductase MsrA 2 (214 aa).

C45 is a catalytic residue.

It belongs to the MsrA Met sulfoxide reductase family.

The catalysed reaction is L-methionyl-[protein] + [thioredoxin]-disulfide + H2O = L-methionyl-(S)-S-oxide-[protein] + [thioredoxin]-dithiol. The enzyme catalyses [thioredoxin]-disulfide + L-methionine + H2O = L-methionine (S)-S-oxide + [thioredoxin]-dithiol. In terms of biological role, has an important function as a repair enzyme for proteins that have been inactivated by oxidation. Catalyzes the reversible oxidation-reduction of methionine sulfoxide in proteins to methionine. The sequence is that of Peptide methionine sulfoxide reductase MsrA 2 (msrA2) from Synechocystis sp. (strain ATCC 27184 / PCC 6803 / Kazusa).